We begin with the raw amino-acid sequence, 122 residues long: Acidic phospholipase A2 4 (122 aa).

7 disulfides stabilise this stretch: Cys26–Cys115, Cys28–Cys44, Cys43–Cys95, Cys49–Cys122, Cys50–Cys88, Cys57–Cys81, and Cys75–Cys86. Phe27, Gly29, and Gly31 together coordinate Ca(2+). His47 is a catalytic residue. Asp48 is a binding site for Ca(2+). Asp89 is a catalytic residue.

It belongs to the phospholipase A2 family. Group II subfamily. D49 sub-subfamily. The cofactor is Ca(2+). In terms of tissue distribution, expressed by the venom gland.

It is found in the secreted. The catalysed reaction is a 1,2-diacyl-sn-glycero-3-phosphocholine + H2O = a 1-acyl-sn-glycero-3-phosphocholine + a fatty acid + H(+). Snake venom phospholipase A2 (PLA2) that has high lipolytic activity. PLA2 catalyzes the calcium-dependent hydrolysis of the 2-acyl groups in 3-sn-phosphoglycerides. This chain is Acidic phospholipase A2 4, found in Craspedocephalus gramineus (Bamboo pit viper).